The primary structure comprises 901 residues: Probable inorganic carbon transporter subunit DabA (901 aa).

The Zn(2+) site is built by C424, D426, H606, and C621.

Belongs to the inorganic carbon transporter (TC 9.A.2) DabA family. As to quaternary structure, forms a complex with DabB. Requires Zn(2+) as cofactor.

The protein resides in the cell membrane. Part of an energy-coupled inorganic carbon pump. The sequence is that of Probable inorganic carbon transporter subunit DabA from Staphylococcus aureus (strain NCTC 8325 / PS 47).